A 310-amino-acid chain; its full sequence is AT-hook motif nuclear-localized protein 15 (310 aa).

Disordered regions lie at residues 15 to 112 (VESP…KESP) and 239 to 310 (EEEQ…PPSY). Composition is skewed to polar residues over residues 31-41 (SNNNNPPTMTR) and 51-67 (TTNNSGSPNTQTQSQEE). Positions 88-100 (RRPRGRPPGSKNK) form a DNA-binding region, a.T hook. The span at 94 to 104 (PPGSKNKPKSP) shows a compositional bias: low complexity. In terms of domain architecture, PPC spans 112–251 (PNSLQSHVLE…QQQEQPLQLE (140 aa)). Pro residues predominate over residues 301 to 310 (GPPPRAPPSY).

Its subcellular location is the nucleus. In terms of biological role, transcription factor that specifically binds AT-rich DNA sequences related to the nuclear matrix attachment regions (MARs). Binds the DNA sequence GNFEI (GA-negative feedback element I) in the GA3OX1 promoter. Negatively regulates plant innate immunity (PTI) to pathogens through the down-regulation of the PAMP-triggered FRK1 expression. This is AT-hook motif nuclear-localized protein 15 from Arabidopsis thaliana (Mouse-ear cress).